The primary structure comprises 278 residues: Protein saf1 (278 aa).

3 disordered regions span residues 1-43, 81-210, and 240-264; these read MLSK…RNMS, KKNI…DIEE, and QKLAKGQKIGQPDRDVSSQVQEDKD. Basic and acidic residues-rich tracts occupy residues 22–38 and 90–103; these read QIKVREERAKRHEERLS and GRVESDKTKEAERQ. Composition is skewed to basic residues over residues 104 to 116 and 169 to 183; these read HKPRKPFIPKNPK and REKKNKSFKPKHHKK. The span at 186 to 202 shows a compositional bias: polar residues; sequence INASSAQPKSTTTTEAA.

The protein resides in the nucleus. It is found in the nucleolus. In Schizosaccharomyces pombe (strain 972 / ATCC 24843) (Fission yeast), this protein is Protein saf1 (saf1).